The primary structure comprises 447 residues: uncharacterized protein (447 aa).

The next 3 helical transmembrane spans lie at 28-48, 241-261, and 397-417; these read IVIV…YPAV, IDAS…YYAI, and PFVL…LSIF.

It localises to the membrane. This is an uncharacterized protein from Schizosaccharomyces pombe (strain 972 / ATCC 24843) (Fission yeast).